The sequence spans 217 residues: Growth hormone variant (217 aa).

Positions 1-26 (MAAGSWTCLILAIALLCLPWLQEGSA) are cleaved as a signal peptide. Disulfide bonds link Cys-79/Cys-191 and Cys-208/Cys-215. Phosphoserine occurs at positions 132 and 176.

The protein belongs to the somatotropin/prolactin family. Expressed in the placenta.

It is found in the secreted. Its function is as follows. Plays an important role in growth control. Its major role in stimulating body growth is to stimulate the liver and other tissues to secrete IGF1. It stimulates both the differentiation and proliferation of myoblasts. It also stimulates amino acid uptake and protein synthesis in muscle and other tissues. The protein is Growth hormone variant (GH2) of Macaca mulatta (Rhesus macaque).